The primary structure comprises 228 residues: Derlin-3 (228 aa).

The Cytoplasmic segment spans residues 1 to 22 (MAGQRLAAGFLQVPAVTRAYTA). A helical membrane pass occupies residues 23 to 43 (ACVLTTAAVQLELLSPFQLYF). Residues 44 to 57 (NPHLVFRKFQVWRL) lie on the Lumenal side of the membrane. Residues 58-78 (ITTFLFFGPLGFGFFFNMLFV) traverse the membrane as a helical segment. At 79 to 98 (FRYCRMLEEGSFRGRKADFV) the chain is on the cytoplasmic side. A helical membrane pass occupies residues 99 to 119 (FMFLFGGVLMTLLGFLGSLFF). The Lumenal segment spans residues 120–168 (LGQALMAMLVYVWSRRSPHVRVNFFGLLNFQAPFLPWALMGFSLLLGNS). A helical transmembrane segment spans residues 169–189 (VVTDLLGILVGHIYYFLEDVF). At 190 to 228 (PNQPGGKRLLLTPSVLKLLLDDPQEDPDYLPLPEEQPEL) the chain is on the cytoplasmic side.

The protein belongs to the derlin family. Forms homo- and heterooligomers with DERL2 and, to a lesser extent, with DERL1. Interacts with VCP and EDEM1. Interacts with SELENOK and SELENOS. Interacts with the signal recognition particle/SRP and the SRP receptor; in the process of endoplasmic reticulum stress-induced pre-emptive quality control. Highly expressed in spleen, lung, liver, spleen and testis. Expressed at intermediate level in kidney. Weakly or not expressed in brain, heart and skeletal muscle.

It is found in the endoplasmic reticulum membrane. Its function is as follows. Functional component of endoplasmic reticulum-associated degradation (ERAD) for misfolded lumenal glycoproteins, but not that of misfolded nonglycoproteins. May act by forming a channel that allows the retrotranslocation of misfolded glycoproteins into the cytosol where they are ubiquitinated and degraded by the proteasome. May mediate the interaction between VCP and the misfolded glycoproteins. May be involved in endoplasmic reticulum stress-induced pre-emptive quality control, a mechanism that selectively attenuates the translocation of newly synthesized proteins into the endoplasmic reticulum and reroutes them to the cytosol for proteasomal degradation. In Mus musculus (Mouse), this protein is Derlin-3.